The following is a 204-amino-acid chain: Thymidylate kinase (204 aa).

Residue 11–18 (GLDKSGKT) participates in ATP binding.

It belongs to the thymidylate kinase family.

It carries out the reaction dTMP + ATP = dTDP + ADP. It participates in pyrimidine metabolism; dTTP biosynthesis. This chain is Thymidylate kinase (TMK), found in Vaccinia virus (strain Ankara) (VACV).